We begin with the raw amino-acid sequence, 300 residues long: uncharacterized protein (300 aa).

Residues 67-179 adopt a coiled-coil conformation; it reads LAFEELEKEK…IAKANELKDS (113 aa). The span at 203–285 shows a compositional bias: low complexity; the sequence is STTASLSQSE…PSSQSTYQQQ (83 aa). Residues 203–300 are disordered; it reads STTASLSQSE…KGFFARLFNL (98 aa).

This is an uncharacterized protein from Staphylococcus epidermidis (strain ATCC 12228 / FDA PCI 1200).